The chain runs to 445 residues: Tubulin beta-2 chain (445 aa).

An MREI motif motif is present at residues 1-4; sequence MREI. Residues glutamine 11, glutamate 69, serine 138, glycine 142, threonine 143, glycine 144, asparagine 204, and asparagine 226 each contribute to the GTP site. Glutamate 69 contributes to the Mg(2+) binding site. Positions 424 to 445 are disordered; sequence QYQDATADEQGEFEEEGEEDEA. Acidic residues predominate over residues 429-445; it reads TADEQGEFEEEGEEDEA. Glutamate 438 bears the 5-glutamyl polyglutamate mark.

The protein belongs to the tubulin family. As to quaternary structure, dimer of alpha and beta chains. A typical microtubule is a hollow water-filled tube with an outer diameter of 25 nm and an inner diameter of 15 nM. Alpha-beta heterodimers associate head-to-tail to form protofilaments running lengthwise along the microtubule wall with the beta-tubulin subunit facing the microtubule plus end conferring a structural polarity. Microtubules usually have 13 protofilaments but different protofilament numbers can be found in some organisms and specialized cells. Requires Mg(2+) as cofactor. In terms of processing, some glutamate residues at the C-terminus are polyglycylated, resulting in polyglycine chains on the gamma-carboxyl group. Glycylation is mainly limited to tubulin incorporated into axonemes (cilia and flagella) whereas glutamylation is prevalent in neuronal cells, centrioles, axonemes, and the mitotic spindle. Both modifications can coexist on the same protein on adjacent residues, and lowering polyglycylation levels increases polyglutamylation, and reciprocally. The precise function of polyglycylation is still unclear. Some glutamate residues at the C-terminus are polyglutamylated, resulting in polyglutamate chains on the gamma-carboxyl group. Polyglutamylation plays a key role in microtubule severing by spastin (SPAST). SPAST preferentially recognizes and acts on microtubules decorated with short polyglutamate tails: severing activity by SPAST increases as the number of glutamates per tubulin rises from one to eight, but decreases beyond this glutamylation threshold. In terms of tissue distribution, highly expressed in neuronal cells.

Its subcellular location is the cytoplasm. It is found in the cytoskeleton. Its function is as follows. Tubulin is the major constituent of microtubules, a cylinder consisting of laterally associated linear protofilaments composed of alpha- and beta-tubulin heterodimers. Microtubules grow by the addition of GTP-tubulin dimers to the microtubule end, where a stabilizing cap forms. Below the cap, tubulin dimers are in GDP-bound state, owing to GTPase activity of alpha-tubulin. This chain is Tubulin beta-2 chain, found in Gallus gallus (Chicken).